Consider the following 286-residue polypeptide: Nucleotide-binding protein APL_0334 (286 aa).

Residue 8–15 participates in ATP binding; that stretch reads GRSGSGKS. Residue 56–59 participates in GTP binding; it reads DIRN.

It belongs to the RapZ-like family.

In terms of biological role, displays ATPase and GTPase activities. This chain is Nucleotide-binding protein APL_0334, found in Actinobacillus pleuropneumoniae serotype 5b (strain L20).